We begin with the raw amino-acid sequence, 373 residues long: tRNA-specific 2-thiouridylase MnmA (373 aa).

ATP contacts are provided by residues glycine 12 to serine 19 and methionine 38. The tract at residues asparagine 98 to aspartate 100 is interaction with target base in tRNA. Cysteine 103 functions as the Nucleophile in the catalytic mechanism. A disulfide bridge connects residues cysteine 103 and cysteine 200. Glycine 127 contacts ATP. The interaction with tRNA stretch occupies residues lysine 150 to glutamine 152. Cysteine 200 serves as the catalytic Cysteine persulfide intermediate. The interaction with tRNA stretch occupies residues arginine 312 to tyrosine 313.

This sequence belongs to the MnmA/TRMU family.

Its subcellular location is the cytoplasm. The catalysed reaction is S-sulfanyl-L-cysteinyl-[protein] + uridine(34) in tRNA + AH2 + ATP = 2-thiouridine(34) in tRNA + L-cysteinyl-[protein] + A + AMP + diphosphate + H(+). In terms of biological role, catalyzes the 2-thiolation of uridine at the wobble position (U34) of tRNA, leading to the formation of s(2)U34. The protein is tRNA-specific 2-thiouridylase MnmA of Streptococcus sanguinis (strain SK36).